The following is a 1248-amino-acid chain: von Willebrand factor A domain-containing protein 5B2 (1248 aa).

The VIT domain maps to 1–138; sequence MPGLYCPTSW…TMTVTLCSSR (138 aa). The segment at 184–204 is disordered; sequence VGSPEEERPTWEQPTATPDVF. The VWFA domain occupies 354-527; the sequence is ELLFLLDGSG…KALEPALSDI (174 aa). Disordered regions lie at residues 590–650, 672–710, 751–789, 1008–1037, and 1126–1168; these read PEEV…SSDT, SASPEPGPGSTCSSESPGSQGPGSPSGSRPLDPPSQQGC, ALAGRSLSSPSGRANPVPGRARHPSLDAIPDGLGPEPGQ, SKSALGEPISPTGDHHGLPHQPPASSRLSL, and DSAT…SSDL. Over residues 595–619 the composition is skewed to polar residues; the sequence is SATSPGTEPTHTTEPLGTGTVSAEL. 3 stretches are compositionally biased toward low complexity: residues 684-701, 751-764, and 780-789; these read SSESPGSQGPGSPSGSRP, ALAGRSLSSPSGRA, and PDGLGPEPGQ. The span at 1127 to 1145 shows a compositional bias: low complexity; the sequence is SATASCSQSPSSGSEGPGQ. The span at 1159–1168 shows a compositional bias: basic and acidic residues; the sequence is GMERQDSSDL.

This chain is von Willebrand factor A domain-containing protein 5B2 (Vwa5b2), found in Mus musculus (Mouse).